The chain runs to 253 residues: Ubiquinone biosynthesis O-methyltransferase (253 aa).

S-adenosyl-L-methionine-binding residues include arginine 47, glycine 78, aspartate 99, and methionine 141.

This sequence belongs to the methyltransferase superfamily. UbiG/COQ3 family.

It carries out the reaction a 3-demethylubiquinol + S-adenosyl-L-methionine = a ubiquinol + S-adenosyl-L-homocysteine + H(+). The catalysed reaction is a 3-(all-trans-polyprenyl)benzene-1,2-diol + S-adenosyl-L-methionine = a 2-methoxy-6-(all-trans-polyprenyl)phenol + S-adenosyl-L-homocysteine + H(+). It functions in the pathway cofactor biosynthesis; ubiquinone biosynthesis. O-methyltransferase that catalyzes the 2 O-methylation steps in the ubiquinone biosynthetic pathway. This chain is Ubiquinone biosynthesis O-methyltransferase, found in Rhodopseudomonas palustris (strain HaA2).